We begin with the raw amino-acid sequence, 324 residues long: Malate dehydrogenase (324 aa).

NAD(+) is bound by residues 20–25 and aspartate 44; that span reads GAGNVG. The substrate site is built by arginine 93 and arginine 99. Residues asparagine 106 and 129–131 contribute to the NAD(+) site; that span reads VTN. Residues asparagine 131 and arginine 162 each contribute to the substrate site. Catalysis depends on histidine 186, which acts as the Proton acceptor.

Belongs to the LDH/MDH superfamily. MDH type 3 family.

The enzyme catalyses (S)-malate + NAD(+) = oxaloacetate + NADH + H(+). In terms of biological role, catalyzes the reversible oxidation of malate to oxaloacetate. In Synechocystis sp. (strain ATCC 27184 / PCC 6803 / Kazusa), this protein is Malate dehydrogenase.